A 240-amino-acid chain; its full sequence is tRNA (guanine-N(7)-)-methyltransferase (240 aa).

4 residues coordinate S-adenosyl-L-methionine: Glu71, Glu96, Asp123, and Asp146. Residue Asp146 is part of the active site. Residues Lys150, Asp182, and 219–222 each bind substrate; that span reads TKFE.

It belongs to the class I-like SAM-binding methyltransferase superfamily. TrmB family.

It catalyses the reaction guanosine(46) in tRNA + S-adenosyl-L-methionine = N(7)-methylguanosine(46) in tRNA + S-adenosyl-L-homocysteine. Its pathway is tRNA modification; N(7)-methylguanine-tRNA biosynthesis. Functionally, catalyzes the formation of N(7)-methylguanine at position 46 (m7G46) in tRNA. The sequence is that of tRNA (guanine-N(7)-)-methyltransferase from Hydrogenovibrio crunogenus (strain DSM 25203 / XCL-2) (Thiomicrospira crunogena).